The primary structure comprises 556 residues: 2-succinyl-5-enolpyruvyl-6-hydroxy-3-cyclohexene-1-carboxylate synthase (556 aa).

This sequence belongs to the TPP enzyme family. MenD subfamily. In terms of assembly, homodimer. Requires Mg(2+) as cofactor. Mn(2+) is required as a cofactor. It depends on thiamine diphosphate as a cofactor.

It carries out the reaction isochorismate + 2-oxoglutarate + H(+) = 5-enolpyruvoyl-6-hydroxy-2-succinyl-cyclohex-3-ene-1-carboxylate + CO2. Its pathway is quinol/quinone metabolism; 1,4-dihydroxy-2-naphthoate biosynthesis; 1,4-dihydroxy-2-naphthoate from chorismate: step 2/7. It participates in quinol/quinone metabolism; menaquinone biosynthesis. Catalyzes the thiamine diphosphate-dependent decarboxylation of 2-oxoglutarate and the subsequent addition of the resulting succinic semialdehyde-thiamine pyrophosphate anion to isochorismate to yield 2-succinyl-5-enolpyruvyl-6-hydroxy-3-cyclohexene-1-carboxylate (SEPHCHC). The protein is 2-succinyl-5-enolpyruvyl-6-hydroxy-3-cyclohexene-1-carboxylate synthase of Escherichia coli (strain SMS-3-5 / SECEC).